The primary structure comprises 710 residues: DNA-directed RNA polymerase III subunit RPC5 (710 aa).

Over residues 146–155 the composition is skewed to basic and acidic residues; that stretch reads DAKHREREAA. The interval 146–169 is disordered; that stretch reads DAKHREREAANEAGDSSQDEAEED. Phosphoserine occurs at positions 161 and 162. A Glycyl lysine isopeptide (Lys-Gly) (interchain with G-Cter in SUMO2) cross-link involves residue Lys171. Ser192 carries the post-translational modification Phosphoserine. Position 224 is a phosphotyrosine (Tyr224). A Glycyl lysine isopeptide (Lys-Gly) (interchain with G-Cter in SUMO2) cross-link involves residue Lys432. Lys498 participates in a covalent cross-link: Glycyl lysine isopeptide (Lys-Gly) (interchain with G-Cter in SUMO1); alternate. A Glycyl lysine isopeptide (Lys-Gly) (interchain with G-Cter in SUMO2); alternate cross-link involves residue Lys498. Residues 498-526 form a disordered region; sequence KEEPLSEEEADGAELEAEEEEPMDTAPST. A compositionally biased stretch (acidic residues) spans 502 to 520; it reads LSEEEADGAELEAEEEEPM. Position 503 is a phosphoserine (Ser503). The tract at residues 558-710 is required for Pol III complex stability; that stretch reads NPVACELKAF…MWYLKGTVQS (153 aa). Lys661 participates in a covalent cross-link: Glycyl lysine isopeptide (Lys-Gly) (interchain with G-Cter in SUMO2).

In terms of assembly, component of the RNA polymerase III complex consisting of at least 17 subunits: a ten-subunit horseshoe-shaped catalytic core composed of POLR3A/RPC1, POLR3B/RPC2, POLR1C/RPAC1, POLR1D/RPAC2, POLR3K/RPC10, POLR2E/RPABC1, POLR2F/RPABC2, POLR2H/RPABC3, POLR2K/RPABC4 and POLR2L/RPABC5; the stalk composed of two subunits POLR3H/RPC8 and CRCP/RPC9, forming a structural mobile part that protrudes out of the core and functions primarily in transcription initiation; and additional subunits homologous to general transcription factors of the RNA polymerase II machinery, POLR3D/RPC4-POLR3E/RPC5 heterodimer and POLR3/CRPC3-POLR3F/RPC6-POLR3G/RPC7 heterotrimer.

It localises to the nucleus. In terms of biological role, DNA-dependent RNA polymerase catalyzes the transcription of DNA into RNA using the four ribonucleoside triphosphates as substrates. Specific peripheric component of RNA polymerase III (Pol III) which synthesizes small non-coding RNAs including 5S rRNA, snRNAs, tRNAs and miRNAs from at least 500 distinct genomic loci. Assembles with POLR3D/RPC4 forming a subcomplex that binds the Pol III core. Enables recruitment of Pol III at transcription initiation site and drives transcription initiation from both type 2 and type 3 DNA promoters. Required for efficient transcription termination and reinitiation. Plays a key role in sensing and limiting infection by intracellular bacteria and DNA viruses. Acts as a nuclear and cytosolic DNA sensor involved in innate immune response. Can sense non-self dsDNA that serves as template for transcription into dsRNA. The non-self RNA polymerase III transcripts, such as Epstein-Barr virus-encoded RNAs (EBERs) induce type I interferon and NF-kappa-B through the RIG-I pathway. The protein is DNA-directed RNA polymerase III subunit RPC5 of Mus musculus (Mouse).